We begin with the raw amino-acid sequence, 206 residues long: Small ribosomal subunit protein uS4 (206 aa).

Residues 15-46 form a disordered region; sequence MGENIWGRPKSPVNKREYGPGQHGQRRKNKLS. An S4 RNA-binding domain is found at 94-154; sequence RRLDAIVYRA…EKSRQLALVL (61 aa).

This sequence belongs to the universal ribosomal protein uS4 family. In terms of assembly, part of the 30S ribosomal subunit. Contacts protein S5. The interaction surface between S4 and S5 is involved in control of translational fidelity.

Functionally, one of the primary rRNA binding proteins, it binds directly to 16S rRNA where it nucleates assembly of the body of the 30S subunit. In terms of biological role, with S5 and S12 plays an important role in translational accuracy. The protein is Small ribosomal subunit protein uS4 of Cereibacter sphaeroides (strain ATCC 17029 / ATH 2.4.9) (Rhodobacter sphaeroides).